The sequence spans 726 residues: tRNA endonuclease ANKZF1 (726 aa).

A disordered region spans residues 40 to 61 (LARAPRTSCSGSGERESPERKL). The segment covering 52 to 61 (GERESPERKL) has biased composition (basic and acidic residues). A C2H2-type zinc finger spans residues 72–96 (LFCSTCDQTFQNHQEQREHYKLDWH). Residues 120-130 (STGDLSSISGS) show a composition bias toward low complexity. Residues 120–141 (STGDLSSISGSEDSDSASEEDL) form a disordered region. The segment covering 131 to 141 (EDSDSASEEDL) has biased composition (acidic residues). A VLRF1 domain is found at 203 to 346 (GPRDCVVLMA…QRVLHKLTTL (144 aa)). Glutamine 246 is a catalytic residue. Phosphoserine is present on residues serine 258, serine 361, and serine 398. Disordered regions lie at residues 387-409 (DEKE…EGED) and 436-474 (RRRR…SSQA). The segment covering 436–445 (RRRRKRNKKE) has biased composition (basic residues). Positions 457–473 (TLLQQTQEEEPSTQSSQ) are enriched in low complexity. Residues 493–526 (ELWNALLAACRAGDVGVLKLQLAPSPADPRVLSL) form an ANK 1 repeat. Serine 533 is subject to Phosphoserine. Residues 534 to 563 (GGFTLLHAAAAAGRGSVVRLLLEAGADPTV) form an ANK 2 repeat. Residues 588–656 (MEKNPDAYDY…RRFAALSDRE (69 aa)) are disordered. At threonine 607 the chain carries Phosphothreonine. The stretch at 609-659 (EMEARQATRKREQKAARRQREEQQQRQQEQEEREREEQRRFAALSDREKRA) forms a coiled coil. Residues 610-656 (MEARQATRKREQKAARRQREEQQQRQQEQEEREREEQRRFAALSDRE) show a composition bias toward basic and acidic residues. Residues 654 to 666 (DREKRALAAERRL) are VCP/p97-interacting motif (VIM). Serine 675 and serine 680 each carry phosphoserine.

The protein belongs to the ANKZF1/VMS1 family. As to quaternary structure, interacts (via VIM motif) with VCP.

The protein resides in the cytoplasm. Functionally, endonuclease that cleaves polypeptidyl-tRNAs downstream of the ribosome-associated quality control (RQC) pathway to release incompletely synthesized polypeptides for degradation. The RQC pathway disassembles aberrantly stalled translation complexes to recycle or degrade the constituent parts. ANKZF1 acts downstream disassembly of stalled ribosomes and specifically cleaves off the terminal 3'-CCA nucleotides universal to all tRNAs from polypeptidyl-tRNAs, releasing (1) ubiquitinated polypeptides from 60S ribosomal subunit for degradation and (2) cleaved tRNAs. ANKZF1-cleaved tRNAs are then repaired and recycled by ELAC1 and TRNT1. Also plays a role in the cellular response to hydrogen peroxide and in the maintenance of mitochondrial integrity under conditions of cellular stress. The polypeptide is tRNA endonuclease ANKZF1 (Homo sapiens (Human)).